The sequence spans 257 residues: tRNA (guanine-N(1)-)-methyltransferase (257 aa).

Residues glycine 112 and 136-141 (LGDYVL) each bind S-adenosyl-L-methionine.

Belongs to the RNA methyltransferase TrmD family. As to quaternary structure, homodimer.

The protein localises to the cytoplasm. The enzyme catalyses guanosine(37) in tRNA + S-adenosyl-L-methionine = N(1)-methylguanosine(37) in tRNA + S-adenosyl-L-homocysteine + H(+). Its function is as follows. Specifically methylates guanosine-37 in various tRNAs. The sequence is that of tRNA (guanine-N(1)-)-methyltransferase from Salinispora arenicola (strain CNS-205).